We begin with the raw amino-acid sequence, 136 residues long: Neuropeptide CCHamide-2 (136 aa).

Positions 1 to 24 (MKSTISLLLVVICTVVLAAQQSQA) are cleaved as a signal peptide. A disulfide bridge links Cys-28 with Cys-35. His-39 bears the Histidine amide mark. Positions 42–78 (RSLSPGSGSGTGVGGGMGEAASGGQEPDYVRPNGLLP) are disordered. A propeptide spanning residues 43–136 (SLSPGSGSGT…ANSAELNGVN (94 aa)) is cleaved from the precursor. Residues 48-59 (SGSGTGVGGGMG) are compositionally biased toward gly residues.

In terms of tissue distribution, expressed in endocrine cells of the larval midgut (at protein level). Also expressed in endocrine cells of the midgut of adult males and females (at protein level). In the midgut, expression occurs mainly in the anterior region (at protein level). In the larval central nervous system, expressed in about 40 neurons in the brain hemispheres and ventral nerve cord (at protein level). Highly expressed in larval and adult gut with low levels in larval and adult brain. Very little expression in the larval fat body. However, another study shows high levels of expression in the larval fat body as well as the larval gut with low levels in the larval central nervous system.

It is found in the secreted. In terms of biological role, ligand for the CCHamide-2 receptor CCHa2-R. In one study, shown to be an orexigenic peptide which induces appetite and stimulates food intake, leading to the release of insulin-like peptides which stimulate growth. In another study, shown to be a nutrient-sensitive peptide derived from peripheral tissues which controls growth by directly regulating the production and release of insulin-like peptides. The protein is Neuropeptide CCHamide-2 of Drosophila melanogaster (Fruit fly).